The sequence spans 211 residues: ATP phosphoribosyltransferase (211 aa).

Belongs to the ATP phosphoribosyltransferase family. Short subfamily. As to quaternary structure, heteromultimer composed of HisG and HisZ subunits.

It is found in the cytoplasm. The enzyme catalyses 1-(5-phospho-beta-D-ribosyl)-ATP + diphosphate = 5-phospho-alpha-D-ribose 1-diphosphate + ATP. The protein operates within amino-acid biosynthesis; L-histidine biosynthesis; L-histidine from 5-phospho-alpha-D-ribose 1-diphosphate: step 1/9. Catalyzes the condensation of ATP and 5-phosphoribose 1-diphosphate to form N'-(5'-phosphoribosyl)-ATP (PR-ATP). Has a crucial role in the pathway because the rate of histidine biosynthesis seems to be controlled primarily by regulation of HisG enzymatic activity. This Hahella chejuensis (strain KCTC 2396) protein is ATP phosphoribosyltransferase.